A 270-amino-acid polypeptide reads, in one-letter code: Vegetative storage protein 1 (270 aa).

The N-terminal stretch at 1–17 is a signal peptide; it reads MKILSLSLLLLLAATVS. N-linked (GlcNAc...) asparagine glycans are attached at residues Asn-115 and Asn-215.

It belongs to the APS1/VSP family. In terms of tissue distribution, expressed in leaves and in gynoecia, especially in styles, the basal and distal ends of ovaries and in siliques.

May function as somatic storage protein during early seedling development. The chain is Vegetative storage protein 1 (VSP1) from Arabidopsis thaliana (Mouse-ear cress).